The following is a 362-amino-acid chain: MLKNKGHSSKKDNLAVNAVALQDHILRDLQLRNLSVADHSKTQVQKKENKSLKRDTKAIIDTGLKKTMQCPKLEDSEKEYVLDPKPPPLTLAQKLGLIGPPPPQLSSDEWEKVKQRSLLQGDSVQPCPICKEEFELRPQVLLSCSHVFHRACLQAFEKFTNKKTCPLCRKNQYQTRVIHGGARLFRIKCVTRIQAYWRGYVVRKWYRNLRETVPPTDAKLRKKFFEKKFTEISHRILCSYNTNIEELFAEIDRCLAINRSVLQQFEEKYGHEITEEEWEKIQVQALRRETHECSICLAPLSPAGGQRVGAGQRSRETALLSCSHVFHHACLLALEEFSVGDRPPFHACPLCRSCYQKKILES.

The segment at 127–169 (CPICKEEFELRPQVLLSCSHVFHRACLQAFEKFTNKKTCPLCR) adopts an RING-type 1; atypical zinc-finger fold. Residues 186–215 (RIKCVTRIQAYWRGYVVRKWYRNLRETVPP) form the IQ domain. The RING-type 2; atypical zinc finger occupies 293-352 (CSICLAPLSPAGGQRVGAGQRSRETALLSCSHVFHHACLLALEEFSVGDRPPFHACPLCR).

The protein localises to the cytoplasm. Functionally, may play a role in sperm formation. The polypeptide is RING finger protein 32 (RNF32) (Macaca fascicularis (Crab-eating macaque)).